The chain runs to 568 residues: MASEWPETSRASSVEENPKLNIPEIVESVSDSKPSLKNQFSTTVIDSSDLNVFNDGAETTVKEQEFTSSELRRLQKLRLKMDLRIIPCLWILYFLSCCLRFTVSLSFTMNTAQGHSLIQTLSGYSAHYLALGLALFYVGYIIFEVPSNLMMAFIEPRIWVSRIQLTIGVVGACHAVLGTKHGNAQSYVALRFFLGVAESGLWPGLAYYMSRWYRGKHLGKRIGWYYTAAQIAAAAVSLVSAGFQKMDGARGLYGYQWMFLIWGVVAIAQALSIPWWLPAVASKEHRKSLSSFIPLPKWMKTLSPQRIGFLTPADKSLHSRYIAEMNVGKRWQWSDLLKSCLDLRVWPFILMYFGIVGVGNGIFNYCTLIIEEINPSFSGIDISLLNAPIWLADALGIVTVMPLYDRFHKKFSFFTGSCLIIIAGLAVANYAPRAWSRYGGLLMIGFGLGPTVPICMAWCSASMAKTYGDVGVASSLALVTGLGNLGSVVTTYALYSGWPGDPTFRKSNDVCIALIGVSIIACGIEFLLDKTGFGQFNASFNNHDHEVEDEQEMTDIKPALPSSQQADA.

Helical transmembrane passes span 85–105 (IIPC…TVSL), 123–143 (GYSA…YIIF), 158–178 (IWVS…AVLG), 187–207 (YVAL…GLAY), 222–242 (IGWY…VSAG), 257–277 (WMFL…PWWL), 345–365 (VWPF…IFNY), 384–404 (LLNA…MPLY), 411–431 (FSFF…ANYA), 439–459 (GGLL…MAWC), 470–490 (VGVA…SVVT), and 508–528 (NDVC…EFLL). Positions 547-568 (VEDEQEMTDIKPALPSSQQADA) are disordered.

This sequence belongs to the major facilitator superfamily. Allantoate permease family.

Its subcellular location is the membrane. Functionally, involved in uptake of biotin and desthiobiotin with the concomitant entry of protons. This Schizosaccharomyces pombe (strain 972 / ATCC 24843) (Fission yeast) protein is Vitamin H transporter 1 (vht1).